The following is a 156-amino-acid chain: Small ribosomal subunit protein uS7c (156 aa).

The protein belongs to the universal ribosomal protein uS7 family. As to quaternary structure, part of the 30S ribosomal subunit.

The protein resides in the plastid. It is found in the chloroplast. In terms of biological role, one of the primary rRNA binding proteins, it binds directly to 16S rRNA where it nucleates assembly of the head domain of the 30S subunit. The chain is Small ribosomal subunit protein uS7c (rps7) from Bowenia serrulata (Byfield fern).